The following is a 197-amino-acid chain: Auxin-responsive protein IAA19 (197 aa).

The EAR-like (transcriptional repression) signature appears at Leu13–Leu17. Residues Met35–Cys47 show a composition bias toward polar residues. The tract at residues Met35–Ala67 is disordered. The PB1 domain occupies Leu96 to Asp184.

This sequence belongs to the Aux/IAA family. Homodimers and heterodimers. Interacts with the auxin response factor ARF7.

Its subcellular location is the nucleus. In terms of biological role, aux/IAA proteins are short-lived transcriptional factors that function as repressors of early auxin response genes at low auxin concentrations. Repression is thought to result from the interaction with auxin response factors (ARFs), proteins that bind to the auxin-responsive promoter element (AuxRE). Formation of heterodimers with ARF proteins may alter their ability to modulate early auxin response genes expression. The chain is Auxin-responsive protein IAA19 (IAA19) from Arabidopsis thaliana (Mouse-ear cress).